The primary structure comprises 1542 residues: Pleiotropic ABC efflux transporter of multiple drugs PDH1 (1542 aa).

Over residues M1–S14 the composition is skewed to low complexity. The interval M1–D61 is disordered. The Cytoplasmic portion of the chain corresponds to M1–N517. The segment covering N24–A33 has biased composition (basic and acidic residues). Residues S35–S47 are compositionally biased toward polar residues. The ABC transporter 1 domain maps to V153–K409. 6 helical membrane passes run S518–F540, F552–I574, V603–V625, F634–F652, L662–I684, and G773–C792. Residues E793–D1220 lie on the Cytoplasmic side of the membrane. Residues T825–I834 are compositionally biased toward basic and acidic residues. Positions T825–T846 are disordered. The segment covering E835 to T846 has biased composition (polar residues). The ABC transporter 2 domain maps to F885–A1128. An ATP-binding site is contributed by G921 to T928. Helical transmembrane passes span Y1221 to F1241, S1256 to V1276, A1296 to A1316, L1342 to I1362, T1370 to A1390, and G1495 to A1515. Residues R1516–F1542 are Cytoplasmic-facing.

It belongs to the ABC transporter superfamily. ABCG family. PDR (TC 3.A.1.205) subfamily. Post-translationally, phosphorylated by PKA. Dephosphorylated on glucose depletion and independently rephosphorylated during glucose exposure or under stress.

It is found in the cell membrane. In terms of biological role, pleiotropic ABC efflux transporter that confers resistance to structurally and functionally unrelated compounds including caspofungin or azoles such as fluconazole, itraconazole, posaconazole, voriconazole, and isavuconazole. Does not play a role in the azole resistance in mature biofilms. In Candida glabrata (strain ATCC 2001 / BCRC 20586 / JCM 3761 / NBRC 0622 / NRRL Y-65 / CBS 138) (Yeast), this protein is Pleiotropic ABC efflux transporter of multiple drugs PDH1.